Reading from the N-terminus, the 493-residue chain is Cobyric acid synthase (493 aa).

Residues 246 to 440 (PIDIAVIKMP…IHGVFDGVAF (195 aa)) enclose the GATase cobBQ-type domain. Cys-326 functions as the Nucleophile in the catalytic mechanism. His-432 is a catalytic residue.

Belongs to the CobB/CobQ family. CobQ subfamily.

It participates in cofactor biosynthesis; adenosylcobalamin biosynthesis. Its function is as follows. Catalyzes amidations at positions B, D, E, and G on adenosylcobyrinic A,C-diamide. NH(2) groups are provided by glutamine, and one molecule of ATP is hydrogenolyzed for each amidation. This is Cobyric acid synthase from Clostridium botulinum (strain Loch Maree / Type A3).